We begin with the raw amino-acid sequence, 317 residues long: Lipoyl synthase (317 aa).

Residues 1-22 (MVTVVNTLNRPRHPEKQNRPET) are disordered. Positions 12-22 (RHPEKQNRPET) are enriched in basic and acidic residues. Residues cysteine 57, cysteine 62, cysteine 68, cysteine 83, cysteine 87, cysteine 90, and serine 296 each coordinate [4Fe-4S] cluster. In terms of domain architecture, Radical SAM core spans 69-285 (WEKKHATFMI…ETVAYAKGFL (217 aa)).

This sequence belongs to the radical SAM superfamily. Lipoyl synthase family. [4Fe-4S] cluster is required as a cofactor.

The protein localises to the cytoplasm. It carries out the reaction [[Fe-S] cluster scaffold protein carrying a second [4Fe-4S](2+) cluster] + N(6)-octanoyl-L-lysyl-[protein] + 2 oxidized [2Fe-2S]-[ferredoxin] + 2 S-adenosyl-L-methionine + 4 H(+) = [[Fe-S] cluster scaffold protein] + N(6)-[(R)-dihydrolipoyl]-L-lysyl-[protein] + 4 Fe(3+) + 2 hydrogen sulfide + 2 5'-deoxyadenosine + 2 L-methionine + 2 reduced [2Fe-2S]-[ferredoxin]. The protein operates within protein modification; protein lipoylation via endogenous pathway; protein N(6)-(lipoyl)lysine from octanoyl-[acyl-carrier-protein]: step 2/2. Its function is as follows. Catalyzes the radical-mediated insertion of two sulfur atoms into the C-6 and C-8 positions of the octanoyl moiety bound to the lipoyl domains of lipoate-dependent enzymes, thereby converting the octanoylated domains into lipoylated derivatives. This Azorhizobium caulinodans (strain ATCC 43989 / DSM 5975 / JCM 20966 / LMG 6465 / NBRC 14845 / NCIMB 13405 / ORS 571) protein is Lipoyl synthase.